A 224-amino-acid polypeptide reads, in one-letter code: Large ribosomal subunit protein uL11c (224 aa).

Residues 1–66 constitute a chloroplast transit peptide; that stretch reads MAQPLVAAPS…SHRRLSIVAM (66 aa). N6,N6,N6-trimethyllysine is present on residues Lys-75 and Lys-111.

As to quaternary structure, component of the chloroplast large ribosomal subunit (LSU). Mature 70S chloroplast ribosomes of higher plants consist of a small (30S) and a large (50S) subunit. The 30S small subunit contains 1 molecule of ribosomal RNA (16S rRNA) and 24 different proteins. The 50S large subunit contains 3 rRNA molecules (23S, 5S and 4.5S rRNA) and 33 different proteins.

The protein localises to the plastid. It localises to the chloroplast. Functionally, component of the chloroplast ribosome (chloro-ribosome), a dedicated translation machinery responsible for the synthesis of chloroplast genome-encoded proteins, including proteins of the transcription and translation machinery and components of the photosynthetic apparatus. In Spinacia oleracea (Spinach), this protein is Large ribosomal subunit protein uL11c (rpl11).